The primary structure comprises 310 residues: Aspartate carbamoyltransferase catalytic subunit (310 aa).

Carbamoyl phosphate is bound by residues arginine 58 and threonine 59. Residue lysine 86 participates in L-aspartate binding. Arginine 108, histidine 136, and glutamine 139 together coordinate carbamoyl phosphate. L-aspartate contacts are provided by arginine 169 and arginine 224. The carbamoyl phosphate site is built by glycine 265 and proline 266.

This sequence belongs to the aspartate/ornithine carbamoyltransferase superfamily. ATCase family. As to quaternary structure, heterododecamer (2C3:3R2) of six catalytic PyrB chains organized as two trimers (C3), and six regulatory PyrI chains organized as three dimers (R2).

It carries out the reaction carbamoyl phosphate + L-aspartate = N-carbamoyl-L-aspartate + phosphate + H(+). It participates in pyrimidine metabolism; UMP biosynthesis via de novo pathway; (S)-dihydroorotate from bicarbonate: step 2/3. In terms of biological role, catalyzes the condensation of carbamoyl phosphate and aspartate to form carbamoyl aspartate and inorganic phosphate, the committed step in the de novo pyrimidine nucleotide biosynthesis pathway. The sequence is that of Aspartate carbamoyltransferase catalytic subunit from Geobacter sp. (strain M21).